A 144-amino-acid polypeptide reads, in one-letter code: Ribosome-binding factor A (144 aa).

The disordered stretch occupies residues lysine 121 to glutamate 144. Residues glutamate 128 to glutamate 138 show a composition bias toward acidic residues.

The protein belongs to the RbfA family. Monomer. Binds 30S ribosomal subunits, but not 50S ribosomal subunits or 70S ribosomes.

It is found in the cytoplasm. Functionally, one of several proteins that assist in the late maturation steps of the functional core of the 30S ribosomal subunit. Associates with free 30S ribosomal subunits (but not with 30S subunits that are part of 70S ribosomes or polysomes). Required for efficient processing of 16S rRNA. May interact with the 5'-terminal helix region of 16S rRNA. The protein is Ribosome-binding factor A of Synechococcus sp. (strain JA-2-3B'a(2-13)) (Cyanobacteria bacterium Yellowstone B-Prime).